The sequence spans 198 residues: MAGSTKDIDALIELMARLPGLGPRSARRAVLHLIRKRALLLTPLADLMGQVAATARECLNCGNVGTSDICDICTDERRATGELCVVEDVADLWAMERSGVFKGRYHVLGGTLSALDGVGPDELRIPRLADRVTAEAISEVILALNATIDGQTTAHYIADQLGGRVRLTSLAQGVPIGGELDYLDDGTISAAMRARKEL.

A C4-type zinc finger spans residues 58–73 (CLNCGNVGTSDICDIC). Positions 81–175 (GELCVVEDVA…RLTSLAQGVP (95 aa)) constitute a Toprim domain.

It belongs to the RecR family.

Its function is as follows. May play a role in DNA repair. It seems to be involved in an RecBC-independent recombinational process of DNA repair. It may act with RecF and RecO. This chain is Recombination protein RecR, found in Ruegeria pomeroyi (strain ATCC 700808 / DSM 15171 / DSS-3) (Silicibacter pomeroyi).